The sequence spans 91 residues: Small ubiquitin-related modifier (91 aa).

Residues 13 to 91 (EYIKIKVVGQ…EVYQEQLGGF (79 aa)) enclose the Ubiquitin-like domain. A Glycyl lysine isopeptide (Gly-Lys) (interchain with K-? in acceptor proteins) cross-link involves residue G90. Residue F91 is a propeptide.

Belongs to the ubiquitin family. SUMO subfamily. Covalently attached to tbx-2. Covalently attached to lin-1. Covalently attached to lin-11. Covalently attached to sop-2. Covalently attached to bet-1. Post-translationally, cleavage of precursor form by ulp-1 is necessary for function.

The protein localises to the cytoplasm. The protein resides in the nucleus. It localises to the cytoskeleton. It is found in the spindle. Its subcellular location is the chromosome. The protein localises to the microtubule organizing center. The protein resides in the centrosome. Ubiquitin-like protein which can be covalently attached to target lysines as a monomer. Does not seem to be involved in protein degradation and may function as an antagonist of ubiquitin in the degradation process. Plays a role in a number of cellular processes such as nuclear transport, DNA replication and repair, mitosis and signal transduction. Covalent attachment to its substrates requires prior activation by the E1 complex aos-1-uba-2 and linkage to the E2 enzyme ubc-9, and can be promoted by an E3 ligase such as gei-17. Required for embryonic development, fertility, vulval morphogenesis and inhibition of vulval cell fates. Probably by sumoylating bet-1, prevents muscle myosin depletion in aging adults probably by preventing myoblast growth factor receptor egl-15 overexpression. Plays a role in the attenuation of the let-60/ras pathway. Plays a role in male tail tip morphogenesis. Plays a role in the mitochondrial stress response with its covalent attachment to transcription factors dve-1 and afts-1 negatively regulating the mitochondrial unfolded protein response. This Caenorhabditis elegans protein is Small ubiquitin-related modifier.